The following is a 465-amino-acid chain: Coumaroyl-CoA:anthocyanidin 3-O-glucoside-6''-O-coumaroyltransferase 2 (465 aa).

N-acetylmethionine is present on Met1. Catalysis depends on proton acceptor residues His173 and Asp406.

This sequence belongs to the plant acyltransferase family. As to expression, highly expressed in flowers, and leaves. Lower levels of expression in stems, roots and siliques.

In terms of biological role, involved in the acylation of the 6'' position of the 3-O-glucose residue of anthocyanin. Also able to use flavonol 3-glucosides as the acyl acceptor. This chain is Coumaroyl-CoA:anthocyanidin 3-O-glucoside-6''-O-coumaroyltransferase 2 (3AT2), found in Arabidopsis thaliana (Mouse-ear cress).